The primary structure comprises 112 residues: Integration host factor subunit alpha (112 aa).

The protein belongs to the bacterial histone-like protein family. In terms of assembly, heterodimer of an alpha and a beta chain.

Functionally, this protein is one of the two subunits of integration host factor, a specific DNA-binding protein that functions in genetic recombination as well as in transcriptional and translational control. The chain is Integration host factor subunit alpha from Rhizobium johnstonii (strain DSM 114642 / LMG 32736 / 3841) (Rhizobium leguminosarum bv. viciae).